Reading from the N-terminus, the 151-residue chain is Protein PLANT CADMIUM RESISTANCE 1 (151 aa).

Helical transmembrane passes span 31-47 and 54-71; these read ITLC…AEIV and CCAA…TSCG.

Belongs to the cornifelin family. In terms of assembly, homopentamer. As to expression, expressed in aerial part, but not in roots. Detected in the guard and mesophyll cells.

The protein localises to the cell membrane. Its function is as follows. Involved in glutathione-independent cadmium resistance. Reduces cadmium uptake rather than activating efflux, but is not closely coupled to calcium transporter. The chain is Protein PLANT CADMIUM RESISTANCE 1 (PCR1) from Arabidopsis thaliana (Mouse-ear cress).